The primary structure comprises 291 residues: D-alanyl-D-alanine carboxypeptidase (291 aa).

Residues 1 to 29 (MRLRRAAATVITTGALLAAGTLGATPATA) form the signal peptide. The active-site Acyl-ester intermediate is Ser64. Lys67 acts as the Proton acceptor in catalysis. Ser125 is an active-site residue. Lys242 is a binding site for substrate.

This sequence belongs to the peptidase S11 family.

It is found in the secreted. The catalysed reaction is Preferential cleavage: (Ac)2-L-Lys-D-Ala-|-D-Ala. Also transpeptidation of peptidyl-alanyl moieties that are N-acyl substituents of D-alanine.. It functions in the pathway cell wall biogenesis; peptidoglycan biosynthesis. Its function is as follows. Removes C-terminal D-alanyl residues from sugar-peptide cell wall precursors. The sequence is that of D-alanyl-D-alanine carboxypeptidase from Streptomyces sp. (strain K15).